Consider the following 403-residue polypeptide: Cytochrome P450 monooxygenase ustC (403 aa).

A signal peptide spans 1–18 (MSPFIFAVTLTFAILALG). N-linked (GlcNAc...) asparagine glycosylation is found at Asn52 and Asn92. Residue Cys318 participates in heme binding.

Belongs to the cytochrome P450 family. It depends on heme as a cofactor.

It participates in mycotoxin biosynthesis. Cytochrome P450 monooxygenase; part of the gene cluster that mediates the biosynthesis of the secondary metabolite ustiloxin B, an antimitotic tetrapeptide. First, ustA is processed by the subtilisin-like endoprotease Kex2 that is outside the ustiloxin B gene cluster, at the C-terminal side of Arg-Lys, after transfer to Golgi apparatus through the endoplasmic reticulum (ER). Cleavage by KEX2 generates 16 peptides YAIG-I to YAIG-XVI. To process the precursor peptide further, at least two peptidases are necessary to cleave the N-terminal and C-terminal sides of the Tyr-Ala-Ile-Gly core peptide which serves as backbone for the synthesis of ustiloxin B, through cyclization and modification of the tyrosine with a non-protein coding amino acid, norvaline. One of the two peptidases must be the serine peptidase ustP; and the other pepdidase is probably ustH. Macrocyclization of the core peptide derived from ustA requires the tyrosinase ustQ, as well as the homologous oxidases ustYa and ustYb, and leads to the production of the first cyclization product N-desmethylustiloxin F. For the formation of N-desmethylustiloxin F, three oxidation steps are required, hydroxylation at the benzylic position, hydroxylation at either the aromatic ring of Tyr or beta-position of Ile, and oxidative cyclization. UstQ may catalyze the oxidation of a phenol moiety, whereas the ustYa and ustYb are most likely responsible for the remaining two-step oxidations. N-desmethylustiloxin F is then methylated by ustM to yield ustiloxin F which in turn substrate of the cytochrome P450 monooxygenase ustC which catalyzes the formation of S-deoxyustiloxin H. The flavoprotein monooxygenases ustF1 and ustF2 then participate in the modification of the side chain of S-deoxyustiloxin H, leading to the synthesis of an oxime intermediate, via ustiloxin H. Finally, carboxylative dehydration performed by the cysteine desulfurase-like protein ustD yields ustiloxin B. This chain is Cytochrome P450 monooxygenase ustC, found in Aspergillus flavus (strain ATCC 200026 / FGSC A1120 / IAM 13836 / NRRL 3357 / JCM 12722 / SRRC 167).